Consider the following 240-residue polypeptide: Dihydromonapterin reductase (240 aa).

Tyr152 acts as the Proton acceptor in catalysis.

The protein belongs to the short-chain dehydrogenases/reductases (SDR) family. FolM subfamily.

It carries out the reaction (6S)-5,6,7,8-tetrahydrofolate + NADP(+) = 7,8-dihydrofolate + NADPH + H(+). The catalysed reaction is 7,8-dihydromonapterin + NADPH + H(+) = 5,6,7,8-tetrahydromonapterin + NADP(+). Catalyzes the reduction of dihydromonapterin to tetrahydromonapterin. Also has lower activity with dihydrofolate. In Escherichia coli O139:H28 (strain E24377A / ETEC), this protein is Dihydromonapterin reductase (folM).